An 828-amino-acid chain; its full sequence is Potassium channel SKOR (828 aa).

Residues 1-86 (MGGSSGGGVS…PDNRWYKAWT (86 aa)) lie on the Cytoplasmic side of the membrane. A helical transmembrane segment spans residues 87–107 (MFILIWALYSSFFTPLEFGFF). Topologically, residues 108–114 (RGLPENL) are extracellular. The helical transmembrane segment at 115–135 (FILDIAGQIAFLVDIVLTFFV) threads the bilayer. Residues 136 to 158 (AYRDSRTYRMIYKRSSIALRYLK) lie on the Cytoplasmic side of the membrane. The helical transmembrane segment at 159–179 (STFIIDLLACMPWDIIYKAAG) threads the bilayer. Topologically, residues 180 to 185 (EKEEVR) are extracellular. Residues 186–206 (YLLLIRLYRVHRVILFFHKME) traverse the membrane as a helical; Voltage-sensor segment. The Cytoplasmic portion of the chain corresponds to 207–220 (KDIRINYLFTRIVK). Residues 221 to 241 (LIFVELYCTHTAACIFYYLAT) form a helical membrane-spanning segment. Residues 242–276 (TLPASQEGYTWIGSLKLGDYSYSKFREIDLWTRYT) are Extracellular-facing. The segment at residues 277–296 (TSMYFAVVTMATVGYGDIHA) is an intramembrane region (pore-forming). Over 297-300 (VNMR) the chain is Extracellular. A helical membrane pass occupies residues 301-321 (EMIFAMVYISFDMILGAYLIG). The Cytoplasmic portion of the chain corresponds to 322–828 (NMTALIVKGS…GQKLYLAVET (507 aa)). 403 to 523 (LFRGCSSEFI…RRILNNLLEG (121 aa)) is a binding site for a nucleoside 3',5'-cyclic phosphate. ANK repeat units lie at residues 545–576 (EAEL…DPNK), 580–609 (DGRS…DVNI), 613–642 (LGST…TLNI), 644–673 (NAGT…DPNS), 677–706 (DHRT…NVLA), and 710–740 (WGNT…QISS). The 73-residue stretch at 756–828 (KCTVYFSHPG…GQKLYLAVET (73 aa)) folds into the KHA domain.

This sequence belongs to the potassium channel family. Plant (TC 1.A.1.4) subfamily. As to quaternary structure, the potassium channel is probably composed of a homo- or heterotetrameric complex of pore-forming subunits. In terms of tissue distribution, expressed in root pericycle and xylem parenchyma, and in flower at a lower level.

The protein localises to the membrane. Highly selective outward-rectifying potassium channel. Involved in potassium release into the xylem sap toward the shoots. Assuming opened or closed conformations in response to the voltage difference across the membrane, the channel is activated by depolarization. The voltage-dependence of the channel is abolished by internal or external acidification. May interact with the cytoskeleton or with regulatory proteins. In Arabidopsis thaliana (Mouse-ear cress), this protein is Potassium channel SKOR (SKOR).